We begin with the raw amino-acid sequence, 89 residues long: uncharacterized protein (89 aa).

3 helical membrane-spanning segments follow: residues 9–29 (ICNFLFQFSLEFFSISSLHSI), 35–55 (ISLSLSLFFLVAILYNIYIYL), and 65–85 (ILFAIPPLCPLCSPCFFFGTS).

The protein resides in the membrane. This is an uncharacterized protein from Schizosaccharomyces pombe (strain 972 / ATCC 24843) (Fission yeast).